The primary structure comprises 411 residues: NADH-quinone oxidoreductase subunit D 2 (411 aa).

The protein belongs to the complex I 49 kDa subunit family. NDH-1 is composed of 14 different subunits. Subunits NuoB, C, D, E, F, and G constitute the peripheral sector of the complex.

The protein localises to the cell membrane. The catalysed reaction is a quinone + NADH + 5 H(+)(in) = a quinol + NAD(+) + 4 H(+)(out). Functionally, NDH-1 shuttles electrons from NADH, via FMN and iron-sulfur (Fe-S) centers, to quinones in the respiratory chain. The immediate electron acceptor for the enzyme in this species is believed to be ubiquinone. Couples the redox reaction to proton translocation (for every two electrons transferred, four hydrogen ions are translocated across the cytoplasmic membrane), and thus conserves the redox energy in a proton gradient. The sequence is that of NADH-quinone oxidoreductase subunit D 2 from Chloroflexus aurantiacus (strain ATCC 29366 / DSM 635 / J-10-fl).